The primary structure comprises 688 residues: Translation initiation factor IF-2 (688 aa).

Composition is skewed to basic and acidic residues over residues 53–62 and 86–95; these read GKEKSEKTKE and KRDDKNEKVN. A disordered region spans residues 53 to 100; that stretch reads GKEKSEKTKEEDDEIETTAKNPIKESMNNKKSNKRDDKNEKVNTENAE. Residues 187–354 enclose the tr-type G domain; the sequence is KRSPIITVMG…MILLSSEILE (168 aa). Positions 196–203 are G1; the sequence is GHVDHGKT. 196–203 contributes to the GTP binding site; the sequence is GHVDHGKT. The interval 221-225 is G2; sequence GITQH. The tract at residues 242–245 is G3; it reads DTPG. Residues 242 to 246 and 296 to 299 each bind GTP; these read DTPGH and NKID. The G4 stretch occupies residues 296 to 299; that stretch reads NKID. The tract at residues 332–334 is G5; it reads SAH.

The protein belongs to the TRAFAC class translation factor GTPase superfamily. Classic translation factor GTPase family. IF-2 subfamily.

Its subcellular location is the cytoplasm. One of the essential components for the initiation of protein synthesis. Protects formylmethionyl-tRNA from spontaneous hydrolysis and promotes its binding to the 30S ribosomal subunits. Also involved in the hydrolysis of GTP during the formation of the 70S ribosomal complex. This is Translation initiation factor IF-2 from Clostridium botulinum (strain Kyoto / Type A2).